A 316-amino-acid chain; its full sequence is Ribosomal protein L11 methyltransferase (316 aa).

Residues threonine 157, glycine 178, aspartate 200, and asparagine 243 each contribute to the S-adenosyl-L-methionine site.

This sequence belongs to the methyltransferase superfamily. PrmA family.

It is found in the cytoplasm. It carries out the reaction L-lysyl-[protein] + 3 S-adenosyl-L-methionine = N(6),N(6),N(6)-trimethyl-L-lysyl-[protein] + 3 S-adenosyl-L-homocysteine + 3 H(+). Methylates ribosomal protein L11. This chain is Ribosomal protein L11 methyltransferase, found in Streptococcus pneumoniae (strain P1031).